Consider the following 286-residue polypeptide: MDDRDLLEIIRPVCGSDTCSDDCAILTLPCGALVTSTDMLHERSDFPAGMTGWQIGWMSVAVTISDIAAMGAEPLQIVLAIGLDTEERLAEIVLGAQACCDTYGAVYAGGDLDAHSELTIVSTGVGIIRDGEPVRRGGAKPGDIICVTGTLGRAILGLTGDSRFWKDLCEPQPRVREGTVARLAGAHAMMDISDGLAISLYDIAAESHVGMEISSGRIPLPPEADVQVALEAALYGGGDFELLFFISEEKMKNLTIPVTQIGRVSEGLKITMDGMELPKKGYLHHW.

D22, S36, T37, and D38 together coordinate Mg(2+). Residue D45 coordinates substrate. Mg(2+)-binding residues include D66 and D111. Residues 110-111 (GD) and R136 contribute to the ATP site. Position 191 (D191) interacts with Mg(2+). S193 contributes to the ATP binding site. Position 194 (D194) interacts with Mg(2+). Position 282 (Y282) interacts with substrate.

It belongs to the thiamine-monophosphate kinase family.

The catalysed reaction is thiamine phosphate + ATP = thiamine diphosphate + ADP. The protein operates within cofactor biosynthesis; thiamine diphosphate biosynthesis; thiamine diphosphate from thiamine phosphate: step 1/1. Catalyzes the ATP-dependent phosphorylation of thiamine-monophosphate (TMP) to form thiamine-pyrophosphate (TPP), the active form of vitamin B1. This chain is Thiamine-monophosphate kinase, found in Methanospirillum hungatei JF-1 (strain ATCC 27890 / DSM 864 / NBRC 100397 / JF-1).